The following is a 105-amino-acid chain: Small ribosomal subunit protein uS10 (105 aa).

This sequence belongs to the universal ribosomal protein uS10 family. As to quaternary structure, part of the 30S ribosomal subunit.

Functionally, involved in the binding of tRNA to the ribosomes. The chain is Small ribosomal subunit protein uS10 from Chlamydia muridarum (strain MoPn / Nigg).